Consider the following 364-residue polypeptide: RNA-binding protein ZC3H11 (364 aa).

The segment at 64–92 (RYKTKLCKNFVQYGTCPYDIRCMFAHGEE) adopts a C3H1-type zinc-finger fold. An MKT1-binding motif motif is present at residues 194–199 (VRHNPY). The segment at 340-364 (EQSQSHLKREGNEGRGEGLHMFLSL) is disordered. Basic and acidic residues predominate over residues 346 to 357 (LKREGNEGRGEG).

As to quaternary structure, interacts (via MKT1-binding motif) with MKT1. Interacts with PBP1 (via C-terminus); the interaction is direct. Phosphorylated at the N-terminus. CK1.2-dependent phosphorylation may lead to proteasome-dependent degradation of ZC3H11 in absence of stress.

The protein localises to the cytoplasm. Functionally, RNA-binding protein involved in regulation of mRNA stability. Binds AU-rich regions in the 3'-UTR of mRNAs and promotes their stabilization by recruiting a MKT1-containing complex. Stabilizes chaperone mRNAs during stress that causes an accumulation of misfolded or unfolded proteins in the cytoplasm. The protein is RNA-binding protein ZC3H11 of Trypanosoma brucei brucei (strain 927/4 GUTat10.1).